The sequence spans 226 residues: Biosynthetic peptidoglycan transglycosylase (226 aa).

Residues 10–30 form a helical membrane-spanning segment; the sequence is IIMTLLALLILPYLLIPVYAL.

This sequence belongs to the glycosyltransferase 51 family.

It localises to the cell inner membrane. The enzyme catalyses [GlcNAc-(1-&gt;4)-Mur2Ac(oyl-L-Ala-gamma-D-Glu-L-Lys-D-Ala-D-Ala)](n)-di-trans,octa-cis-undecaprenyl diphosphate + beta-D-GlcNAc-(1-&gt;4)-Mur2Ac(oyl-L-Ala-gamma-D-Glu-L-Lys-D-Ala-D-Ala)-di-trans,octa-cis-undecaprenyl diphosphate = [GlcNAc-(1-&gt;4)-Mur2Ac(oyl-L-Ala-gamma-D-Glu-L-Lys-D-Ala-D-Ala)](n+1)-di-trans,octa-cis-undecaprenyl diphosphate + di-trans,octa-cis-undecaprenyl diphosphate + H(+). It functions in the pathway cell wall biogenesis; peptidoglycan biosynthesis. In terms of biological role, peptidoglycan polymerase that catalyzes glycan chain elongation from lipid-linked precursors. In Agrobacterium fabrum (strain C58 / ATCC 33970) (Agrobacterium tumefaciens (strain C58)), this protein is Biosynthetic peptidoglycan transglycosylase.